The primary structure comprises 98 residues: C-X-C motif chemokine 10 (98 aa).

Residues 1–21 (MNQTAILICCLIFLTLSGIQG) form the signal peptide. The residue at position 26 (Arg-26) is a Citrulline; by PAD2. Disulfide bonds link Cys-30–Cys-57 and Cys-32–Cys-74.

The protein belongs to the intercrine alpha (chemokine CxC) family. In terms of assembly, monomer, dimer, and tetramer. Interacts with CXCR3 (via N-terminus). Post-translationally, several proteases can mediate post-secretion cleavages. DPP4 cleaves CXCL10 on its N-terminal 2 amino acids leading to an antagonist form of CXCL10. This dominant negative form is capable of binding CXCR3 but does not induce signaling. MMP9 cleaves 9 amino acids instead. As to expression, mainly secreted by monocytes, endothelial cells as well as fibroblasts. Expressed by epithelial cells in thymus. Microglial cells produce CXCL10 in response to viral stimulation.

Its subcellular location is the secreted. Functionally, pro-inflammatory cytokine that is involved in a wide variety of processes such as chemotaxis, differentiation, and activation of peripheral immune cells, regulation of cell growth, apoptosis and modulation of angiostatic effects. Plays thereby an important role during viral infections by stimulating the activation and migration of immune cells to the infected sites. Mechanistically, binding of CXCL10 to the CXCR3 receptor activates G protein-mediated signaling and results in downstream activation of phospholipase C-dependent pathway, an increase in intracellular calcium production and actin reorganization. In turn, recruitment of activated Th1 lymphocytes occurs at sites of inflammation. Activation of the CXCL10/CXCR3 axis also plays an important role in neurons in response to brain injury for activating microglia, the resident macrophage population of the central nervous system, and directing them to the lesion site. This recruitment is an essential element for neuronal reorganization. The polypeptide is C-X-C motif chemokine 10 (CXCL10) (Homo sapiens (Human)).